The sequence spans 504 residues: L-carnitine/gamma-butyrobetaine antiporter (504 aa).

12 helical membrane passes run 10 to 30 (IEPKVFFPPLIIVGILCWLTV), 51 to 71 (WGWAFEWYMVVMLFGWFWLVF), 92 to 112 (IFMMFASCTSAAVLFWGSIEI), 143 to 163 (GPLPWATYSFLSVAFAYFFFV), 195 to 215 (FYLVALIFAMGTSLGLATPLV), 231 to 251 (LDAIIITCWIILNAICVACGL), 263 to 283 (SYLSFLMLGWVFIVSGASFIM), 316 to 336 (WTVFYWAWWVIYAIQMSIFLA), 347 to 367 (LCFGMVMGLTASTWILWTVLG), 403 to 423 (LSTATMWGFFILCFIATVTLI), 446 to 466 (LLVRIGWSILVGIIGIVLLAL), and 475 to 495 (AIIAGGCPLFFVNIMVTLSFI).

Belongs to the BCCT transporter (TC 2.A.15) family. CaiT subfamily. In terms of assembly, homotrimer.

The protein resides in the cell inner membrane. It catalyses the reaction 4-(trimethylamino)butanoate(in) + (R)-carnitine(out) = 4-(trimethylamino)butanoate(out) + (R)-carnitine(in). It participates in amine and polyamine metabolism; carnitine metabolism. In terms of biological role, catalyzes the exchange of L-carnitine for gamma-butyrobetaine. The protein is L-carnitine/gamma-butyrobetaine antiporter of Escherichia fergusonii (strain ATCC 35469 / DSM 13698 / CCUG 18766 / IAM 14443 / JCM 21226 / LMG 7866 / NBRC 102419 / NCTC 12128 / CDC 0568-73).